The sequence spans 85 residues: Exodeoxyribonuclease 7 small subunit (85 aa).

The protein belongs to the XseB family. Heterooligomer composed of large and small subunits.

Its subcellular location is the cytoplasm. The enzyme catalyses Exonucleolytic cleavage in either 5'- to 3'- or 3'- to 5'-direction to yield nucleoside 5'-phosphates.. In terms of biological role, bidirectionally degrades single-stranded DNA into large acid-insoluble oligonucleotides, which are then degraded further into small acid-soluble oligonucleotides. The chain is Exodeoxyribonuclease 7 small subunit from Mycobacterium bovis (strain ATCC BAA-935 / AF2122/97).